A 209-amino-acid chain; its full sequence is MDETLNDLAAHVSAALSGAVLGSLVAHGELTLQIDPAQIVKVATFLRDDPACLFHCIVDVCGVDYPAREKRFDVVYHLLSLKQNVRIRLKVETDEDTPVPSICSVFPGANWFEREAYDMYGILFTGHPELRRLLTDYGFDGHPLRKDFPTTGFVEVRYDDEQKRVVYEPVRLPQEFRNFDFLSPWEGVEYVLPGDEKASGQPPVPPKAG.

This sequence belongs to the complex I 30 kDa subunit family. In terms of assembly, NDH-1 is composed of 14 different subunits. Subunits NuoB, C, D, E, F, and G constitute the peripheral sector of the complex.

It is found in the cell inner membrane. It catalyses the reaction a quinone + NADH + 5 H(+)(in) = a quinol + NAD(+) + 4 H(+)(out). Functionally, NDH-1 shuttles electrons from NADH, via FMN and iron-sulfur (Fe-S) centers, to quinones in the respiratory chain. The immediate electron acceptor for the enzyme in this species is believed to be ubiquinone. Couples the redox reaction to proton translocation (for every two electrons transferred, four hydrogen ions are translocated across the cytoplasmic membrane), and thus conserves the redox energy in a proton gradient. The chain is NADH-quinone oxidoreductase subunit C from Xanthobacter autotrophicus (strain ATCC BAA-1158 / Py2).